Here is a 341-residue protein sequence, read N- to C-terminus: L-threonine 3-dehydrogenase (341 aa).

A Zn(2+)-binding site is contributed by C38. Catalysis depends on charge relay system residues T40 and H43. The Zn(2+) site is built by H63, E64, C93, C96, C99, and C107. Residues I175, D195, R200, 262–264, and 286–287 each bind NAD(+); these read LGI and IY.

The protein belongs to the zinc-containing alcohol dehydrogenase family. Homotetramer. Zn(2+) serves as cofactor.

The protein localises to the cytoplasm. It catalyses the reaction L-threonine + NAD(+) = (2S)-2-amino-3-oxobutanoate + NADH + H(+). It participates in amino-acid degradation; L-threonine degradation via oxydo-reductase pathway; glycine from L-threonine: step 1/2. In terms of biological role, catalyzes the NAD(+)-dependent oxidation of L-threonine to 2-amino-3-ketobutyrate. The sequence is that of L-threonine 3-dehydrogenase from Shewanella sp. (strain W3-18-1).